Here is a 414-residue protein sequence, read N- to C-terminus: Gamma-glutamyl phosphate reductase (414 aa).

The protein belongs to the gamma-glutamyl phosphate reductase family.

It localises to the cytoplasm. It carries out the reaction L-glutamate 5-semialdehyde + phosphate + NADP(+) = L-glutamyl 5-phosphate + NADPH + H(+). It functions in the pathway amino-acid biosynthesis; L-proline biosynthesis; L-glutamate 5-semialdehyde from L-glutamate: step 2/2. Catalyzes the NADPH-dependent reduction of L-glutamate 5-phosphate into L-glutamate 5-semialdehyde and phosphate. The product spontaneously undergoes cyclization to form 1-pyrroline-5-carboxylate. This chain is Gamma-glutamyl phosphate reductase, found in Bacillus anthracis (strain A0248).